Here is a 634-residue protein sequence, read N- to C-terminus: Bacteriophytochrome (634 aa).

Cys13 contacts biliverdin IXalpha. One can recognise a PAS 1 domain in the interval 13-118 (CAREPIHIPG…YPQQWLVEME (106 aa)). The tract at residues 13–514 (CAREPIHIPG…ELMERKRFQQ (502 aa)) is photosensory core domain. The GAF domain maps to 151-305 (RVAKGLRSLI…VTDAVARTLA (155 aa)). The segment at 325-508 (TVREKLITDF…SLRVLIELME (184 aa)) is phytochrome-specific (PHY). Positions 452–480 (WAGNPQLAKLEDIPNSRLSPRKSFDLWQQ) are tongue domain. In terms of domain architecture, PAS 2 spans 515–590 (DFTLLEASLS…ELLQDALRNG (76 aa)). The interval 515-634 (DFTLLEASLS…HWLLQLRDPE (120 aa)) is PAS9, output module, not required to bind biliverdin IX-alpha, required for dimerization.

The protein in the N-terminal section; belongs to the phytochrome family. As to quaternary structure, forms head-to-head homodimers. Post-translationally, contains one covalently linked biliverdin IX-alpha chromophore; present in the crystal structure as a mixture of Pr and Meta-R configurations.

Its function is as follows. Photoreceptor which exists in two forms that are reversibly interconvertible by light: far-red light (733 nm) converts protein to the red-absorbing (Pr) form, while red light (630 nm) partly converts the protein to the far-red-absorbing (Pfr) form. Regulates virulence of X.campestris pv. campestris on its host plants, perhaps by fine-tuning expression to ambient light levels and/or spatial cues. The Pr form may sense light and partially inhibit virulence; in the dark (Pfr form) biofilm and xanathan production rise and bacteria are more virulent. Strains overexpressing this protein have significantly decreased amounts of extracellular beta-1,4-endoglucanase, produce less xanthin and have decreased transcription of genes involved in virulence such as endoglucanases, type 2 secretion systems, xanthan production and flagellar-dependent motility. The polypeptide is Bacteriophytochrome (bphP) (Xanthomonas campestris pv. campestris (strain 8004)).